The sequence spans 416 residues: MNEPEGLRFRRLNRPQIITDELQEPQYKGTSTYSGKVFRVILVTLGGCLILPLLVVFFLLESPIHPELLSLSEPPLMSGCYEPNFKLREAQRLFEDQLVGPESIANFGDLIYTGTADGKIVKIEGKSITVIARLGKPPCDGSREQEPSCGRPLGIRVGPNGTLFVADAYLGLFKVNPVTGEVTNLVSAGQMVGGRRLSFVNDLDVTQDGRKVYFTDSSSRWQRRDYLHLIMEATADGRVLEYDTETKEVTVLMENLRFANGIQLFPDEESVLVAETTMARIRRVHVSGLNKGGMDTFVDNLPGFPDNIRRSSSGGYWVAMSAVRPNPGFSMLDFLSQKPWIKKLIFKLFSQDVLMKFVPRYSLVIELQESGACMRSFHDPHGMVAAYVSEAHEHDGHLYLGSFRSPYLCKLDLSKV.

Topologically, residues Met-1 to Arg-39 are cytoplasmic. Residues Val-40–Leu-60 traverse the membrane as a helical segment. Residues Glu-61–Asp-412 lie on the Extracellular side of the membrane. A glycan (N-linked (GlcNAc...) asparagine) is linked at Asn-160.

It belongs to the strictosidine synthase family.

The protein resides in the membrane. The chain is Adipocyte plasma membrane-associated protein (apmap) from Salmo salar (Atlantic salmon).